Consider the following 276-residue polypeptide: Formamidopyrimidine-DNA glycosylase (276 aa).

The active-site Schiff-base intermediate with DNA is Pro2. The active-site Proton donor is Glu3. Lys59 functions as the Proton donor; for beta-elimination activity in the catalytic mechanism. Residues His92, Arg111, and Lys155 each contribute to the DNA site. The segment at 239–273 (AVYGQTGAPCPRCGTAIEKIKVGGRGTHFCPTCQQ) adopts an FPG-type zinc-finger fold. Arg263 functions as the Proton donor; for delta-elimination activity in the catalytic mechanism.

It belongs to the FPG family. Monomer. Zn(2+) is required as a cofactor.

It carries out the reaction Hydrolysis of DNA containing ring-opened 7-methylguanine residues, releasing 2,6-diamino-4-hydroxy-5-(N-methyl)formamidopyrimidine.. The enzyme catalyses 2'-deoxyribonucleotide-(2'-deoxyribose 5'-phosphate)-2'-deoxyribonucleotide-DNA = a 3'-end 2'-deoxyribonucleotide-(2,3-dehydro-2,3-deoxyribose 5'-phosphate)-DNA + a 5'-end 5'-phospho-2'-deoxyribonucleoside-DNA + H(+). In terms of biological role, involved in base excision repair of DNA damaged by oxidation or by mutagenic agents. Acts as a DNA glycosylase that recognizes and removes damaged bases. Has a preference for oxidized purines, such as 7,8-dihydro-8-oxoguanine (8-oxoG). Has AP (apurinic/apyrimidinic) lyase activity and introduces nicks in the DNA strand. Cleaves the DNA backbone by beta-delta elimination to generate a single-strand break at the site of the removed base with both 3'- and 5'-phosphates. This Exiguobacterium sibiricum (strain DSM 17290 / CCUG 55495 / CIP 109462 / JCM 13490 / 255-15) protein is Formamidopyrimidine-DNA glycosylase.